A 288-amino-acid chain; its full sequence is Zinc finger protein ZAT9 (288 aa).

Residues 4–26 (YKCRVCFKSFVNGKALGGHMRSH) form a C2H2-type 1 zinc finger. Disordered regions lie at residues 20 to 82 (GGHM…LTRK), 101 to 123 (SQLG…DTTT), and 189 to 210 (GGHR…QRSE). Residues 37 to 52 (PSQLSYETESDVSSSD) are compositionally biased toward polar residues. 2 consecutive C2H2-type zinc fingers follow at residues 173 to 195 (YKCE…RASH) and 224 to 246 (HECP…KRSH).

It localises to the nucleus. Functionally, probable transcription factor that may be involved in stress responses. The sequence is that of Zinc finger protein ZAT9 (ZAT9) from Arabidopsis thaliana (Mouse-ear cress).